The following is a 514-amino-acid chain: 2'-5'-oligoadenylate synthase-like protein (514 aa).

Alanine 2 is modified (N-acetylalanine). 2 Ubiquitin-like domains span residues 354–433 (IHLT…IPSE) and 434–509 (IQVF…KGEA).

It belongs to the 2-5A synthase family. In terms of assembly, specifically interacts with the ligand binding domain of the thyroid receptor (TR). TRIP14 does not require the presence of thyroid hormone for its interaction. Binds MBD1. As to expression, expressed in most tissues, with the highest levels in primary blood Leukocytes and other hematopoietic system tissues, colon, stomach and to some extent in testis.

The protein localises to the nucleus. It is found in the nucleolus. The protein resides in the cytoplasm. Functionally, does not have 2'-5'-OAS activity, but can bind double-stranded RNA. Displays antiviral activity against encephalomyocarditis virus (EMCV) and hepatitis C virus (HCV) via an alternative antiviral pathway independent of RNase L. The chain is 2'-5'-oligoadenylate synthase-like protein (OASL) from Homo sapiens (Human).